Here is a 314-residue protein sequence, read N- to C-terminus: 3'-5' exoribonuclease YhaM (314 aa).

One can recognise an HD domain in the interval 163–279 (HVVSMLDLAK…LHYIDNLDAK (117 aa)).

The protein belongs to the YhaM family.

Functionally, shows a 3'-5' exoribonuclease activity. This Bacillus cereus (strain AH187) protein is 3'-5' exoribonuclease YhaM.